The following is a 127-amino-acid chain: Glycine cleavage system H protein 1 (127 aa).

The region spanning 20-101 (SVTVGITAYA…MGEGWFFRFI (82 aa)) is the Lipoyl-binding domain. Lys-60 is modified (N6-lipoyllysine).

Belongs to the GcvH family. As to quaternary structure, the glycine cleavage system is composed of four proteins: P, T, L and H. Requires (R)-lipoate as cofactor.

Functionally, the glycine cleavage system catalyzes the degradation of glycine. The H protein shuttles the methylamine group of glycine from the P protein to the T protein. The sequence is that of Glycine cleavage system H protein 1 from Pseudomonas putida (strain ATCC 47054 / DSM 6125 / CFBP 8728 / NCIMB 11950 / KT2440).